We begin with the raw amino-acid sequence, 782 residues long: Protein NEDD1 (782 aa).

WD repeat units lie at residues 1–34 (MMSN…GDPC), 41–80 (SPGC…LGTV), 90–130 (SAEE…CIKK), 133–172 (GHTS…RATE), 176–216 (PNGQ…PKMS), 220–260 (QHSA…SSSC), 262–301 (AYEA…QPVT), and 307–358 (SNSE…TPSA). Disordered regions lie at residues 350–393 (PLPS…WPSG) and 467–512 (PIFD…EAWG). Composition is skewed to polar residues over residues 352-362 (PSTTPSASQSA), 370-386 (VSAS…TPNR), and 488-498 (SFGSITPTASS). Residues 753-782 (VLSSILENQAEQMKELKLLRKENQELRQRL) adopt a coiled-coil conformation.

As to expression, expressed in root meristematic cells.

It localises to the nucleus envelope. The protein resides in the chromosome. It is found in the centromere. The protein localises to the kinetochore. Its subcellular location is the cytoplasm. It localises to the cytoskeleton. The protein resides in the phragmoplast. It is found in the microtubule organizing center. Functionally, regulates microtubules organization in a centrosome-independent manner. Required for the spindle to be positioned correctly and for the function of gamma-tubulin in organizing phragmoplast microtubules. Component of active gamma-tubulin ring complexes (gamma-TuRCs) associated with cortical microtubules in interphase cells. Mediates gamma-TuRC recruitment to the nucleation sites and is important for determining the ratio of branched to parallel nucleation. May mediate the localization of GCP2 and GCP3 to the nuclear envelope. This Arabidopsis thaliana (Mouse-ear cress) protein is Protein NEDD1.